The primary structure comprises 670 residues: UvrABC system protein B (670 aa).

The 158-residue stretch at 26-183 (EGLEDGLAHQ…RRLAELQYSR (158 aa)) folds into the Helicase ATP-binding domain. 39-46 (GVTGSGKT) contacts ATP. The Beta-hairpin motif lies at 92-115 (YYDYYQPEAYVPSSDTFIEKDASV). One can recognise a Helicase C-terminal domain in the interval 431 to 597 (QVDDLLSEIR…GLNKKISDIL (167 aa)). One can recognise a UVR domain in the interval 630-665 (ELKIRELESKMLTHAQNLEFEEAAALRDELQALRAQ).

Belongs to the UvrB family. In terms of assembly, forms a heterotetramer with UvrA during the search for lesions. Interacts with UvrC in an incision complex.

It localises to the cytoplasm. In terms of biological role, the UvrABC repair system catalyzes the recognition and processing of DNA lesions. A damage recognition complex composed of 2 UvrA and 2 UvrB subunits scans DNA for abnormalities. Upon binding of the UvrA(2)B(2) complex to a putative damaged site, the DNA wraps around one UvrB monomer. DNA wrap is dependent on ATP binding by UvrB and probably causes local melting of the DNA helix, facilitating insertion of UvrB beta-hairpin between the DNA strands. Then UvrB probes one DNA strand for the presence of a lesion. If a lesion is found the UvrA subunits dissociate and the UvrB-DNA preincision complex is formed. This complex is subsequently bound by UvrC and the second UvrB is released. If no lesion is found, the DNA wraps around the other UvrB subunit that will check the other stand for damage. The chain is UvrABC system protein B from Pectobacterium carotovorum subsp. carotovorum (strain PC1).